The sequence spans 166 residues: Protein YciF (166 aa).

As to quaternary structure, homodimer.

The polypeptide is Protein YciF (yciF) (Escherichia coli (strain K12)).